We begin with the raw amino-acid sequence, 199 residues long: VKFDIKNQCGYTVWAAGLPGGGKEFDQGQTWTVNLAAGTASARFWGRTGCTFDASGKGSCRSGDCGGQLSCTVSGAVPATLAEYTQSDQDYYDVSLVDGFNIPLAINPTNTKCTAPACKADINAVCPSELKVDGGCNSACNVLQTDQYCCRNAYVNNCPATNYSKIFKNQCPQAYSYAKDDTATFACASGTDYSIVFCP.

8 disulfide bridges follow: C9–C198, C50–C60, C65–C71, C113–C187, C118–C171, C126–C136, C140–C149, and C150–C158.

The protein belongs to the thaumatin family. As to expression, expressed in pollen.

The protein resides in the secreted. It is found in the extracellular space. Its subcellular location is the extracellular matrix. The protein localises to the pollen coat. It localises to the cytoplasm. The protein resides in the nucleus. It is found in the mitochondrion. Its subcellular location is the endoplasmic reticulum. The protein localises to the golgi apparatus. It localises to the golgi stack. The protein resides in the vesicle. It is found in the vacuole. The protein is Pathogenesis-related 5 protein Cup a 3 of Hesperocyparis arizonica (Arizona cypress).